A 509-amino-acid polypeptide reads, in one-letter code: DAP3-binding cell death enhancer 1 (509 aa).

Residues 1 to 23 (MWRLTGILGRALPRLLGPGFRGI) constitute a mitochondrion transit peptide. 2 disordered regions span residues 19 to 60 (GFRG…RNRD) and 143 to 185 (VLPS…PGLL). A propeptide spans 24-101 (TPKPTSSDGP…AVLALHLARQ (78 aa)) (extended MTS). A compositionally biased stretch (polar residues) spans 26 to 40 (KPTSSDGPQTTSTTL). Basic and acidic residues-rich tracts occupy residues 46-60 (NFDR…RNRD) and 156-168 (GLRE…EEPA). TPR repeat units follow at residues 213–245 (AGPP…QLSV), 246–278 (AIAF…RGYS), 279–313 (KAQY…VQGH), 314–351 (SLAQ…DSGL), 352–385 (TEAQ…SNGD), 386–423 (SQSR…GNEP), and 470–498 (ASST…AMPS). An SIFI-degron motif is present at residues 307 to 326 (LAAVQGHSLAQYRYARCLLQ).

It belongs to the DELE1 family. In terms of assembly, interacts with DAP3. As to quaternary structure, interacts (via TPR repeats) with EIF2AK1/HRI; activating the protein kinase activity of EIF2AK1/HRI, thereby promoting the integrated stress response (ISR). Homooctamer; oligomerization is required to activate EIF2AK1/HRI. Interacts (via TPR repeats) with EIF2AK1/HRI; activating the protein kinase activity of EIF2AK1/HRI, thereby promoting the integrated stress response (ISR). Unstable protein in absence of stress: imported in the mitochondrial matrix following processing by the mitochondrial-processing peptidase (MPP), where it is degraded by LONP1. Stabilized in response to iron deficiency: iron deficiency impairs mitochondrial import, promoting localization at the mitochondrial surface and stabilization. Cleaved by OMA1 in response to mitochondrial stress, generating the DAP3-binding cell death enhancer 1 short form (DELE1(S) or S-DELE1) that accumulates in the cytosol and activates the protein kinase activity of EIF2AK1/HRI. Protein cleavage by OMA1 can take place at different positions, and apparently does not require a specific sequence motif. Post-translationally, ubiquitinated and degraded by the SIFI complex once the mitochondrial stress has been resolved, thereby providing stress response silencing. Within the SIFI complex, UBR4 initiates ubiquitin chain that are further elongated or branched by KCMF1.

The protein localises to the mitochondrion. Its subcellular location is the mitochondrion outer membrane. The protein resides in the mitochondrion inner membrane. It is found in the cytoplasm. It localises to the cytosol. Protein kinase activator that acts as a key activator of the integrated stress response (ISR) following various stresses, such as iron deficiency, mitochondrial stress or mitochondrial DNA breaks. Detects impaired protein import and processing in mitochondria, activating the ISR. May also required for the induction of death receptor-mediated apoptosis through the regulation of caspase activation. Functionally, protein kinase activator that activates the ISR in response to iron deficiency: iron deficiency impairs mitochondrial import, promoting DELE1 localization at the mitochondrial surface, where it binds and activates EIF2AK1/HRI to trigger the ISR. In terms of biological role, protein kinase activator generated by protein cleavage in response to mitochondrial stress, which accumulates in the cytosol and specifically binds to and activates the protein kinase activity of EIF2AK1/HRI. It thereby activates the integrated stress response (ISR): EIF2AK1/HRI activation promotes eIF-2-alpha (EIF2S1) phosphorylation, leading to a decrease in global protein synthesis and the induction of selected genes, including the transcription factor ATF4, the master transcriptional regulator of the ISR. Also acts as an activator of PRKN-independent mitophagy: activates the protein kinase activity of EIF2AK1/HRI in response to mitochondrial damage, promoting eIF-2-alpha (EIF2S1) phosphorylation, leading to mitochondrial localization of EIF2S1 followed by induction of mitophagy. The sequence is that of DAP3-binding cell death enhancer 1 from Rattus norvegicus (Rat).